The chain runs to 312 residues: MFFHKKRNVNGFLLLDKPKGMTSNNVLQKVKIIFKAKKAGYIGTLDPLATGILPICFGEATKFSNYLNASDKHYNVIARLGEKTSTSDSDGIIVRKRPILFTPIQLSLALKALTGSVNQIPSMYSAVKYKGIPLYKYARQGINVKRNIRCVFIYKIDLVDQKDNWIELNVHCSKGTYIRTLIEDLGEKLFCGAHVIRLRRLKIGLLSYSKLVKLSFLENLLNEKNVVKINFFKKIDDLLMPVDTPVYFLPKIYISIEKLSVFRLGQKVNFSSSITNGLVRVFEKDNNTFIGLGKINSEKTLIPYRLVSMLTN.

Catalysis depends on aspartate 46, which acts as the Nucleophile. Substrate is bound by residues tyrosine 74, tyrosine 177, and leucine 198.

It belongs to the pseudouridine synthase TruB family. Type 1 subfamily.

It carries out the reaction uridine(55) in tRNA = pseudouridine(55) in tRNA. In terms of biological role, responsible for synthesis of pseudouridine from uracil-55 in the psi GC loop of transfer RNAs. This Buchnera aphidicola subsp. Schizaphis graminum (strain Sg) protein is tRNA pseudouridine synthase B.